A 22-amino-acid chain; its full sequence is Motilin (22 aa).

The segment covering F1–Q11 has biased composition (polar residues). The tract at residues F1 to Q22 is disordered. The span at K12 to Q22 shows a compositional bias: basic and acidic residues.

The protein belongs to the motilin family.

The protein localises to the secreted. Plays an important role in the regulation of interdigestive gastrointestinal motility and indirectly causes rhythmic contraction of duodenal and colonic smooth muscle. In Gallus gallus (Chicken), this protein is Motilin (MLN).